The following is a 240-amino-acid chain: tRNA (guanine-N(7)-)-methyltransferase (240 aa).

Residues 1–10 (MTESQDTPIT) show a composition bias toward polar residues. Positions 1–20 (MTESQDTPITTDGEARPHRR) are disordered. The S-adenosyl-L-methionine site is built by Glu-70, Glu-95, Asp-122, and Asp-145. The active site involves Asp-145. Residues Lys-149, Asp-181, and 218–221 (TKFE) contribute to the substrate site.

This sequence belongs to the class I-like SAM-binding methyltransferase superfamily. TrmB family.

It carries out the reaction guanosine(46) in tRNA + S-adenosyl-L-methionine = N(7)-methylguanosine(46) in tRNA + S-adenosyl-L-homocysteine. It functions in the pathway tRNA modification; N(7)-methylguanine-tRNA biosynthesis. In terms of biological role, catalyzes the formation of N(7)-methylguanine at position 46 (m7G46) in tRNA. In Pseudomonas putida (strain W619), this protein is tRNA (guanine-N(7)-)-methyltransferase.